The sequence spans 378 residues: GTP cyclohydrolase-2 (378 aa).

Residues 1-180 are DHBP synthase-like; sequence MEEVSSHVKS…IKDMIEFRIK (180 aa). Residues 181–378 are GTP cyclohydrolase II; it reads SEKIVERVIE…KMGHLICFND (198 aa). A GTP-binding site is contributed by 229 to 233; that stretch reads RIHSE. The Zn(2+) site is built by Cys-234, Cys-245, and Cys-247. Residues Gln-250, 273–275, and Thr-295 contribute to the GTP site; that span reads EGR. Asp-307 acts as the Proton acceptor in catalysis. Catalysis depends on Arg-309, which acts as the Nucleophile. 2 residues coordinate GTP: Thr-330 and Lys-335.

In the N-terminal section; belongs to the DHBP synthase family. It in the C-terminal section; belongs to the GTP cyclohydrolase II family. The cofactor is Zn(2+).

The enzyme catalyses GTP + 4 H2O = 2,5-diamino-6-hydroxy-4-(5-phosphoribosylamino)-pyrimidine + formate + 2 phosphate + 3 H(+). Its pathway is cofactor biosynthesis; riboflavin biosynthesis; 5-amino-6-(D-ribitylamino)uracil from GTP: step 1/4. Its function is as follows. Catalyzes the conversion of GTP to 2,5-diamino-6-ribosylamino-4(3H)-pyrimidinone 5'-phosphate (DARP), formate and pyrophosphate. The chain is GTP cyclohydrolase-2 (ribA) from Archaeoglobus fulgidus (strain ATCC 49558 / DSM 4304 / JCM 9628 / NBRC 100126 / VC-16).